A 356-amino-acid polypeptide reads, in one-letter code: Chorismate synthase (356 aa).

Residue Arg44 participates in NADP(+) binding. FMN contacts are provided by residues 121 to 123 (HFS), Gly278, 293 to 297 (KPTPS), and Arg320.

The protein belongs to the chorismate synthase family. It depends on FMNH2 as a cofactor.

The catalysed reaction is 5-O-(1-carboxyvinyl)-3-phosphoshikimate = chorismate + phosphate. The protein operates within metabolic intermediate biosynthesis; chorismate biosynthesis; chorismate from D-erythrose 4-phosphate and phosphoenolpyruvate: step 7/7. Functionally, catalyzes the anti-1,4-elimination of the C-3 phosphate and the C-6 proR hydrogen from 5-enolpyruvylshikimate-3-phosphate (EPSP) to yield chorismate, which is the branch point compound that serves as the starting substrate for the three terminal pathways of aromatic amino acid biosynthesis. This reaction introduces a second double bond into the aromatic ring system. The polypeptide is Chorismate synthase (Pyrococcus abyssi (strain GE5 / Orsay)).